We begin with the raw amino-acid sequence, 577 residues long: Arginine--tRNA ligase (577 aa).

The 'HIGH' region signature appears at 123-133 (PNLAKEMHVGH).

This sequence belongs to the class-I aminoacyl-tRNA synthetase family. As to quaternary structure, monomer.

It is found in the cytoplasm. It catalyses the reaction tRNA(Arg) + L-arginine + ATP = L-arginyl-tRNA(Arg) + AMP + diphosphate. In Marinomonas sp. (strain MWYL1), this protein is Arginine--tRNA ligase.